A 201-amino-acid chain; its full sequence is Large ribosomal subunit protein uL18 (201 aa).

The protein belongs to the universal ribosomal protein uL18 family. As to quaternary structure, part of the 50S ribosomal subunit. Contacts the 5S and 23S rRNAs.

This is one of the proteins that bind and probably mediate the attachment of the 5S RNA into the large ribosomal subunit, where it forms part of the central protuberance. The chain is Large ribosomal subunit protein uL18 from Thermococcus kodakarensis (strain ATCC BAA-918 / JCM 12380 / KOD1) (Pyrococcus kodakaraensis (strain KOD1)).